We begin with the raw amino-acid sequence, 246 residues long: Ubiquinone biosynthesis O-methyltransferase (246 aa).

S-adenosyl-L-methionine-binding residues include Arg-36, Gly-60, Asp-81, and Leu-123.

Belongs to the methyltransferase superfamily. UbiG/COQ3 family.

The enzyme catalyses a 3-demethylubiquinol + S-adenosyl-L-methionine = a ubiquinol + S-adenosyl-L-homocysteine + H(+). It catalyses the reaction a 3-(all-trans-polyprenyl)benzene-1,2-diol + S-adenosyl-L-methionine = a 2-methoxy-6-(all-trans-polyprenyl)phenol + S-adenosyl-L-homocysteine + H(+). It functions in the pathway cofactor biosynthesis; ubiquinone biosynthesis. Functionally, O-methyltransferase that catalyzes the 2 O-methylation steps in the ubiquinone biosynthetic pathway. This Rickettsia typhi (strain ATCC VR-144 / Wilmington) protein is Ubiquinone biosynthesis O-methyltransferase.